Reading from the N-terminus, the 494-residue chain is Ribose import ATP-binding protein RbsA (494 aa).

2 ABC transporter domains span residues 2–239 (IDMR…VGRQ) and 251–493 (IGEE…TGGN). 34–41 (GENGAGKS) serves as a coordination point for ATP.

This sequence belongs to the ABC transporter superfamily. Ribose importer (TC 3.A.1.2.1) family. In terms of assembly, the complex is composed of an ATP-binding protein (RbsA), two transmembrane proteins (RbsC) and a solute-binding protein (RbsB).

It localises to the cell membrane. It catalyses the reaction D-ribose(out) + ATP + H2O = D-ribose(in) + ADP + phosphate + H(+). Its function is as follows. Part of the ABC transporter complex RbsABC involved in ribose import. Responsible for energy coupling to the transport system. This Geobacillus kaustophilus (strain HTA426) protein is Ribose import ATP-binding protein RbsA.